Consider the following 254-residue polypeptide: tRNA (guanine-N(1)-)-methyltransferase (254 aa).

Residues G112 and 131–136 each bind S-adenosyl-L-methionine; that span reads IGDYIL.

The protein belongs to the RNA methyltransferase TrmD family. In terms of assembly, homodimer.

It localises to the cytoplasm. It carries out the reaction guanosine(37) in tRNA + S-adenosyl-L-methionine = N(1)-methylguanosine(37) in tRNA + S-adenosyl-L-homocysteine + H(+). Its function is as follows. Specifically methylates guanosine-37 in various tRNAs. The sequence is that of tRNA (guanine-N(1)-)-methyltransferase from Sulfurihydrogenibium sp. (strain YO3AOP1).